Consider the following 339-residue polypeptide: Putative NADP-dependent oxidoreductase YfmJ (339 aa).

NADP(+) contacts are provided by residues 156 to 159 (GAVG), Lys182, Tyr198, Asn222, 244 to 250 (CGAISSY), 277 to 279 (FIV), and Asn327.

Belongs to the NADP-dependent oxidoreductase L4BD family.

In terms of biological role, putative quinone oxidoreductase that may contribute to the degradation of aromatic compounds. This chain is Putative NADP-dependent oxidoreductase YfmJ (yfmJ), found in Bacillus subtilis (strain 168).